We begin with the raw amino-acid sequence, 496 residues long: E3 ubiquitin-protein ligase Hakai (496 aa).

The disordered stretch occupies residues Pro35–Asp60. The RING-type; degenerate zinc finger occupies Cys104–Leu144. Positions Cys157 to His215 are HYB domain. Residues Phe173 to His199 form a C2H2-type zinc finger. Over residues Val304 to Ala314 the composition is skewed to polar residues. The segment at Val304–Gln496 is disordered. Pro residues-rich tracts occupy residues Ala350–Ser360, Gly380–Gly397, and Met407–His430. Positions Ser434 to Pro449 are enriched in polar residues. Over residues Pro464–Pro483 the composition is skewed to pro residues.

It belongs to the Hakai family. In terms of assembly, homodimer. Interacts with tyrosine-phosphorylated SRC substrates. Component of the WMM complex, a N6-methyltransferase complex composed of a catalytic subcomplex, named MAC, and of an associated subcomplex, named MACOM. Component of the MACOM subcomplex.

It localises to the nucleus speckle. Its subcellular location is the nucleus. The protein resides in the nucleoplasm. The catalysed reaction is S-ubiquitinyl-[E2 ubiquitin-conjugating enzyme]-L-cysteine + [acceptor protein]-L-lysine = [E2 ubiquitin-conjugating enzyme]-L-cysteine + N(6)-ubiquitinyl-[acceptor protein]-L-lysine.. The protein operates within protein modification; protein ubiquitination. Its function is as follows. E3 ubiquitin-protein ligase that mediates ubiquitination of several tyrosine-phosphorylated Src substrates. Associated component of the WMM complex, a complex that mediates N6-methyladenosine (m6A) methylation of RNAs, a modification that plays a role in the efficiency of mRNA splicing and RNA processing. The chain is E3 ubiquitin-protein ligase Hakai from Xenopus laevis (African clawed frog).